The sequence spans 183 residues: Ribosomal RNA small subunit methyltransferase G (183 aa).

S-adenosyl-L-methionine contacts are provided by residues Gly-60, Phe-65, 111–112 (IE), and Arg-125.

It belongs to the methyltransferase superfamily. RNA methyltransferase RsmG family.

It is found in the cytoplasm. It catalyses the reaction guanosine(527) in 16S rRNA + S-adenosyl-L-methionine = N(7)-methylguanosine(527) in 16S rRNA + S-adenosyl-L-homocysteine. Functionally, specifically methylates the N7 position of guanine in position 527 of 16S rRNA. This chain is Ribosomal RNA small subunit methyltransferase G, found in Campylobacter hominis (strain ATCC BAA-381 / DSM 21671 / CCUG 45161 / LMG 19568 / NCTC 13146 / CH001A).